The following is a 155-amino-acid chain: Large ribosomal subunit protein uL22c (155 aa).

This sequence belongs to the universal ribosomal protein uL22 family. Part of the 50S ribosomal subunit.

It is found in the plastid. The protein localises to the chloroplast. Its function is as follows. This protein binds specifically to 23S rRNA. Functionally, the globular domain of the protein is located near the polypeptide exit tunnel on the outside of the subunit, while an extended beta-hairpin is found that lines the wall of the exit tunnel in the center of the 70S ribosome. The chain is Large ribosomal subunit protein uL22c (rpl22) from Coffea arabica (Arabian coffee).